Consider the following 426-residue polypeptide: Glutamate-1-semialdehyde 2,1-aminomutase (426 aa).

K265 is subject to N6-(pyridoxal phosphate)lysine.

Belongs to the class-III pyridoxal-phosphate-dependent aminotransferase family. HemL subfamily. As to quaternary structure, homodimer. Pyridoxal 5'-phosphate serves as cofactor.

The protein resides in the cytoplasm. The catalysed reaction is (S)-4-amino-5-oxopentanoate = 5-aminolevulinate. The protein operates within porphyrin-containing compound metabolism; protoporphyrin-IX biosynthesis; 5-aminolevulinate from L-glutamyl-tRNA(Glu): step 2/2. The sequence is that of Glutamate-1-semialdehyde 2,1-aminomutase from Escherichia coli O127:H6 (strain E2348/69 / EPEC).